A 206-amino-acid chain; its full sequence is Large ribosomal subunit protein uL4 (206 aa).

Positions Gly-46 to Thr-77 are disordered. The span at His-58 to Gly-70 shows a compositional bias: basic residues.

The protein belongs to the universal ribosomal protein uL4 family. In terms of assembly, part of the 50S ribosomal subunit.

One of the primary rRNA binding proteins, this protein initially binds near the 5'-end of the 23S rRNA. It is important during the early stages of 50S assembly. It makes multiple contacts with different domains of the 23S rRNA in the assembled 50S subunit and ribosome. In terms of biological role, forms part of the polypeptide exit tunnel. In Polaromonas naphthalenivorans (strain CJ2), this protein is Large ribosomal subunit protein uL4.